Here is a 183-residue protein sequence, read N- to C-terminus: MTATAQQLEYLKNSIQSIEDYPKPGILFRDVTSLLEDPKAYALSIELLTERYKDAGITKVVGTEARGFLFGAPVALALGVGFVPVRKPRKLPRETIAETYELEYGTDQLEIHVDAIKPGDKVLVVDDLLATGGTIDATVKLIRRLGGEVHDAAFIINLFDLGGEQRLEKLGIHCYSLVPFPGH.

It belongs to the purine/pyrimidine phosphoribosyltransferase family. Homodimer.

Its subcellular location is the cytoplasm. The catalysed reaction is AMP + diphosphate = 5-phospho-alpha-D-ribose 1-diphosphate + adenine. Its pathway is purine metabolism; AMP biosynthesis via salvage pathway; AMP from adenine: step 1/1. Its function is as follows. Catalyzes a salvage reaction resulting in the formation of AMP, that is energically less costly than de novo synthesis. The protein is Adenine phosphoribosyltransferase of Klebsiella pneumoniae subsp. pneumoniae (strain ATCC 700721 / MGH 78578).